The chain runs to 315 residues: Olfactory receptor 8J2 (315 aa).

The Extracellular portion of the chain corresponds to 1–24; that stretch reads MASGNLTWVTEFILVGVSDDPELQ. The N-linked (GlcNAc...) asparagine glycan is linked to Asn5. Residues 25-45 form a helical membrane-spanning segment; sequence IPLFLVFLVLYLLTVAGNLGI. Topologically, residues 46–57 are cytoplasmic; the sequence is ITLTSVDPQLQT. The helical transmembrane segment at 58–78 threads the bilayer; the sequence is PMYFFLRHLAIINLCNSTVVA. At 79–97 the chain is on the extracellular side; sequence PKMLVNFLVTKKTISYYGC. Cysteines 97 and 179 form a disulfide. A helical transmembrane segment spans residues 98–118; sequence AAQLGGFLVFIVAEIFTLAAM. Over 119–143 the chain is Cytoplasmic; the sequence is AYDRYVAIWSPLLYAVVVSPKVCRL. Residues 144 to 164 traverse the membrane as a helical segment; sequence LVSLTYLQSLITALTVSSCVF. The Extracellular portion of the chain corresponds to 165–205; it reads SVSYCSSNIINHFYCDDVPLLALSCSDTYIPETAVFIFSGT. The helical transmembrane segment at 206–226 threads the bilayer; that stretch reads NLLFSMIVVLISYFNIVITIL. The Cytoplasmic segment spans residues 227-239; it reads RIRSSEGRQKAFS. A helical membrane pass occupies residues 240-260; the sequence is TCASHMIAVVVFYGTLLFMYL. The Extracellular segment spans residues 261-271; the sequence is QPRSNHSLDTD. Residue Asn265 is glycosylated (N-linked (GlcNAc...) asparagine). Residues 272–292 form a helical membrane-spanning segment; that stretch reads KMASVFYTLVIPVLNPLIYSL. Over 293-315 the chain is Cytoplasmic; sequence RNKNVKDALKRFLDNPCRSLKLM.

Belongs to the G-protein coupled receptor 1 family.

The protein resides in the membrane. Functionally, odorant receptor. This chain is Olfactory receptor 8J2 (OR8J2), found in Homo sapiens (Human).